The primary structure comprises 89 residues: Late cornified envelope protein 3A (89 aa).

Composition is skewed to low complexity over residues 1–10 and 17–46; these read MSCQQNQQQC and PAKSPAQCLPPASSSCAPSSGGCGPSSERS. 2 disordered regions span residues 1 to 46 and 62 to 89; these read MSCQ…SERS and CQSSNSCDRGSGQQGGSSSCGHSSAGCC.

Belongs to the LCE family. Interacts with CYSRT1; the interaction is direct. As to expression, skin-specific. Expression was readily detected in adult trunk skin, adult arm skin, fetal skin, penal skin, vulva, esophagus and tongue. Not expressed in the cervix, rectum, lung, colon, or placenta.

In terms of biological role, a structural component of the cornified envelope of the stratum corneum involved in innate cutaneous host defense. Possesses defensin-like antimicrobial activity against a broad spectrum of Gram-positive and Gram-negative bacteria, both aerobic and anaerobic species. Upon inflammation, may regulate skin barrier repair by shaping cutaneous microbiota composition and immune response to bacterial antigens. The chain is Late cornified envelope protein 3A from Homo sapiens (Human).